Reading from the N-terminus, the 128-residue chain is Small ribosomal subunit protein eS8 (128 aa).

A disordered region spans residues Met1–Leu37. Residues Thr13–Lys23 are compositionally biased toward basic residues.

This sequence belongs to the eukaryotic ribosomal protein eS8 family. In terms of assembly, part of the 30S ribosomal subunit.

The sequence is that of Small ribosomal subunit protein eS8 from Sulfurisphaera tokodaii (strain DSM 16993 / JCM 10545 / NBRC 100140 / 7) (Sulfolobus tokodaii).